The following is a 159-amino-acid chain: SsrA-binding protein (159 aa).

This sequence belongs to the SmpB family.

The protein localises to the cytoplasm. In terms of biological role, required for rescue of stalled ribosomes mediated by trans-translation. Binds to transfer-messenger RNA (tmRNA), required for stable association of tmRNA with ribosomes. tmRNA and SmpB together mimic tRNA shape, replacing the anticodon stem-loop with SmpB. tmRNA is encoded by the ssrA gene; the 2 termini fold to resemble tRNA(Ala) and it encodes a 'tag peptide', a short internal open reading frame. During trans-translation Ala-aminoacylated tmRNA acts like a tRNA, entering the A-site of stalled ribosomes, displacing the stalled mRNA. The ribosome then switches to translate the ORF on the tmRNA; the nascent peptide is terminated with the 'tag peptide' encoded by the tmRNA and targeted for degradation. The ribosome is freed to recommence translation, which seems to be the essential function of trans-translation. The chain is SsrA-binding protein from Bifidobacterium adolescentis (strain ATCC 15703 / DSM 20083 / NCTC 11814 / E194a).